Reading from the N-terminus, the 145-residue chain is D-aminoacyl-tRNA deacylase (145 aa).

A Gly-cisPro motif, important for rejection of L-amino acids motif is present at residues 137-138 (GP).

Belongs to the DTD family. As to quaternary structure, homodimer.

Its subcellular location is the cytoplasm. It catalyses the reaction glycyl-tRNA(Ala) + H2O = tRNA(Ala) + glycine + H(+). It carries out the reaction a D-aminoacyl-tRNA + H2O = a tRNA + a D-alpha-amino acid + H(+). Its function is as follows. An aminoacyl-tRNA editing enzyme that deacylates mischarged D-aminoacyl-tRNAs. Also deacylates mischarged glycyl-tRNA(Ala), protecting cells against glycine mischarging by AlaRS. Acts via tRNA-based rather than protein-based catalysis; rejects L-amino acids rather than detecting D-amino acids in the active site. By recycling D-aminoacyl-tRNA to D-amino acids and free tRNA molecules, this enzyme counteracts the toxicity associated with the formation of D-aminoacyl-tRNA entities in vivo and helps enforce protein L-homochirality. The chain is D-aminoacyl-tRNA deacylase from Pseudomonas putida (strain ATCC 700007 / DSM 6899 / JCM 31910 / BCRC 17059 / LMG 24140 / F1).